Consider the following 406-residue polypeptide: Dihydroorotase, mitochondrial (406 aa).

A mitochondrion-targeting transit peptide spans methionine 1–lysine 41. Residues histidine 69, histidine 71, lysine 155, histidine 193, histidine 231, and aspartate 305 each coordinate Zn(2+). Residue lysine 155 is modified to N6-carboxylysine.

The protein belongs to the metallo-dependent hydrolases superfamily. DHOase family. Class II DHOase subfamily. Zn(2+) is required as a cofactor.

The protein resides in the mitochondrion. The enzyme catalyses (S)-dihydroorotate + H2O = N-carbamoyl-L-aspartate + H(+). Its pathway is pyrimidine metabolism; UMP biosynthesis via de novo pathway; (S)-dihydroorotate from bicarbonate: step 3/3. This chain is Dihydroorotase, mitochondrial (PYRC), found in Oryza sativa subsp. japonica (Rice).